A 102-amino-acid chain; its full sequence is uncharacterized protein (102 aa).

A helical membrane pass occupies residues 29 to 52; it reads IGSTYFCFGGAIFILVAPLTNLVY.

The protein resides in the membrane. This is an uncharacterized protein from Saccharomyces cerevisiae (strain ATCC 204508 / S288c) (Baker's yeast).